A 316-amino-acid chain; its full sequence is MTVIDNHGALAKDGELSEASARDYFELLKPRVMSLVVFTAFAGLVLAPGHIHPVLGLIAILCIAVGAGASGALNMWYDADIDAIMSRTAKRPIPAGRIAPSEALAFGLVLSGFSVVILGLAVNWLSAGILAFTIFFYAVVYTMWLKRSTPQNIVIGGAAGAFPPMIGWACVTNSVTIESTVLFLIIFLWTPAHFWALALFKMRDYEAVGVPMLPNVAGERVTKHQIVAYAVLTAVCGILPSFLGFASFGYGLVAAALGAIFIYCSIAVWRMPDGDLKMIPAKKLFAFSIFYLFAVFSALMIDRLASIFVSHTGGWF.

9 helical membrane-spanning segments follow: residues 32–52 (VMSLVVFTAFAGLVLAPGHIH), 53–73 (PVLGLIAILCIAVGAGASGAL), 93–113 (IPAGRIAPSEALAFGLVLSGF), 116–136 (VILGLAVNWLSAGILAFTIFF), 152–172 (NIVIGGAAGAFPPMIGWACVT), 180–200 (TVLFLIIFLWTPAHFWALALF), 221–241 (VTKHQIVAYAVLTAVCGILPS), 252–271 (LVAAALGAIFIYCSIAVWRM), and 289–309 (IFYLFAVFSALMIDRLASIFV).

Belongs to the UbiA prenyltransferase family. Protoheme IX farnesyltransferase subfamily.

It is found in the cell inner membrane. It catalyses the reaction heme b + (2E,6E)-farnesyl diphosphate + H2O = Fe(II)-heme o + diphosphate. The protein operates within porphyrin-containing compound metabolism; heme O biosynthesis; heme O from protoheme: step 1/1. Converts heme B (protoheme IX) to heme O by substitution of the vinyl group on carbon 2 of heme B porphyrin ring with a hydroxyethyl farnesyl side group. This chain is Protoheme IX farnesyltransferase, found in Rhizobium leguminosarum bv. trifolii (strain WSM2304).